The primary structure comprises 705 residues: Dolichyl-diphosphooligosaccharide--protein glycosyltransferase subunit STT3A (705 aa).

The Cytoplasmic segment spans residues 1–15 (MTKLGFLRLSYEKQD). Residues 16–34 (TLLKLLILSMAAVLSFSTR) traverse the membrane as a helical segment. At 35 to 111 (LFAVLRFESV…VLHFFHITID (77 aa)) the chain is on the lumenal side. The DXD motif 1 signature appears at 47 to 49 (EFD). D49 is a Mn(2+) binding site. Residues 112-141 (IRNVCVFLAPLFSSFTTIVTYHLTKELKDA) form a helical membrane-spanning segment. G142 is a topological domain (cytoplasmic). A helical transmembrane segment spans residues 143–158 (AGLLAAAMIAVVPGYI). Over 159-170 (SRSVAGSYDNEG) the chain is Lumenal. D167 and E169 together coordinate Mn(2+). The DXD motif 2 signature appears at 167-169 (DNE). A helical transmembrane segment spans residues 171-188 (IAIFCMLLTYYMWIKAVK). Over 189-191 (TGS) the chain is Cytoplasmic. The helical transmembrane segment at 192 to 207 (IYWAAKCALAYFYMVS) threads the bilayer. Residues 208-210 (SWG) are Lumenal-facing. The helical transmembrane segment at 211 to 229 (GYVFLINLIPLHVLVLMLT) threads the bilayer. Residues 230-234 (GRFSH) lie on the Cytoplasmic side of the membrane. The helical transmembrane segment at 235 to 253 (RIYVAYCTVYCLGTILSMQ) threads the bilayer. Residues 254 to 265 (ISFVGFQPVLSS) lie on the Lumenal side of the membrane. The chain crosses the membrane as a helical span at residues 266–283 (EHMAAFGVFGLCQIHAFV). At 284–298 (DYLRSKLNPQQFEVL) the chain is on the cytoplasmic side. The helical transmembrane segment at 299–317 (FRSVISLVGFVLLTVGALL) threads the bilayer. Topologically, residues 318–356 (MLTGKISPWTGRFYSLLDPSYAKNNIPIIASVSEHQPTT) are lumenal. The SVSE motif signature appears at 348-351 (SVSE). A helical transmembrane segment spans residues 357 to 379 (WSSYYFDLQLLVFMFPVGLYYCF). Over 380–385 (SNLSDA) the chain is Cytoplasmic. The chain crosses the membrane as a helical span at residues 386–402 (RIFIIMYGVTSMYFSAV). At 403 to 406 (MVRL) the chain is on the lumenal side. R405 contributes to the dolichyl diphosphooligosaccharide binding site. Residues 407 to 428 (MLVLAPVMCILSGIGVSQVLST) form a helical membrane-spanning segment. Over 429 to 453 (YMKNLDISRPDKKSKKQQDSTYPIK) the chain is Cytoplasmic. A helical transmembrane segment spans residues 454–473 (NEVASGMILVMAFFLITYTF). Topologically, residues 474 to 705 (HSTWVTSEAY…DLDNRGLSRT (232 aa)) are lumenal. The interval 525–527 (WWD) is interacts with target acceptor peptide in protein substrate. Residues 525 to 529 (WWDYG) carry the WWDYG motif motif. Y530 provides a ligand contact to dolichyl diphosphooligosaccharide. N-linked (GlcNAc...) asparagine glycosylation is found at N537 and N544. A glycan (N-linked (GlcNAc...) (high mannose) asparagine) is linked at N548. The short motif at 592–599 (DINKFLWM) is the DK motif element.

Belongs to the STT3 family. As to quaternary structure, component of the oligosaccharyltransferase (OST) complex. There are 2 OST complexes, OST-A and OST-B, which contain STT3A or STT3B as catalytic subunit, respectively. OST-A and OST-B contain common core subunits RPN1, RPN2, OST48, OST4, DAD1 and TMEM258, and OST-A contains DC2/OSTC and KRTCAP2/KCP2 specific accessory subunits. OST-A complex assembly occurs through the formation of 3 subcomplexes. Subcomplex 1 contains RPN1 and TMEM258, subcomplex 2 contains the OST-A-specific subunits STT3A, DC2/OSTC, and KCP2 as well as the core subunit OST4, and subcomplex 3 contains RPN2, DAD1, and OST48. The OST-A complex can form stable complexes with the Sec61 complex or with both the Sec61 and TRAP complexes. It depends on Mg(2+) as a cofactor. Mn(2+) is required as a cofactor.

It is found in the endoplasmic reticulum membrane. The catalysed reaction is a di-trans,poly-cis-dolichyl diphosphooligosaccharide + L-asparaginyl-[protein] = N(4)-(oligosaccharide-(1-&gt;4)-N-acetyl-beta-D-glucosaminyl-(1-&gt;4)-N-acetyl-beta-D-glucosaminyl)-L-asparaginyl-[protein] + a di-trans,poly-cis-dolichyl diphosphate + H(+). It participates in protein modification; protein glycosylation. Functionally, catalytic subunit of the oligosaccharyl transferase (OST) complex that catalyzes the initial transfer of a defined glycan (Glc(3)Man(9)GlcNAc(2) in eukaryotes) from the lipid carrier dolichol-pyrophosphate to an asparagine residue within an Asn-X-Ser/Thr consensus motif in nascent polypeptide chains, the first step in protein N-glycosylation. N-glycosylation occurs cotranslationally and the complex associates with the Sec61 complex at the channel-forming translocon complex that mediates protein translocation across the endoplasmic reticulum (ER). All subunits are required for a maximal enzyme activity. This subunit contains the active site and the acceptor peptide and donor lipid-linked oligosaccharide (LLO) binding pockets. STT3A is present in the majority of OST complexes and mediates cotranslational N-glycosylation of most sites on target proteins, while STT3B-containing complexes are required for efficient post-translational glycosylation and mediate glycosylation of sites that have been skipped by STT3A. STT3A-containing OST-A complex is also required to prevent hyperglycosylation of some target proteins by preventing glycosylation of facultative sites before folding of target proteins is completed. This is Dolichyl-diphosphooligosaccharide--protein glycosyltransferase subunit STT3A from Canis lupus familiaris (Dog).